Consider the following 246-residue polypeptide: Chemokine-binding protein (246 aa).

Residues S108 to P125 show a composition bias toward polar residues. Positions S108–P132 are disordered.

The protein belongs to the orthopoxvirus OPG001 family.

The protein localises to the secreted. Its function is as follows. Inhibits host immune defense by binding to host chemokines. Binds host CC chemokines (beta chemokines) such as RANTES with high affinity, but not CXC or C chemokines (alpha and gamma chemokines). In Monkeypox virus, this protein is Chemokine-binding protein (OPG001).